The following is a 73-amino-acid chain: Conotoxin Gla(3)-TxVI (73 aa).

The N-terminal stretch at 1–19 (MQKLIILLLVAAVLMSAQA) is a signal peptide. The propeptide occupies 20–44 (VLQEKRPKEKIKFLSKRKTDAEKQQ). Cystine bridges form between C48-C62, C55-C66, and C61-C71. P49 carries the 4-hydroxyproline modification. E53 carries the 4-carboxyglutamate; partial modification. 4-hydroxyproline is present on P54. E60 bears the 4-carboxyglutamate mark. Residue W64 is modified to 6'-bromotryptophan.

This sequence belongs to the conotoxin O2 superfamily. In terms of tissue distribution, expressed by the venom duct.

Its subcellular location is the secreted. This is Conotoxin Gla(3)-TxVI from Conus textile (Cloth-of-gold cone).